Consider the following 282-residue polypeptide: Ribonuclease P protein subunit p38 (282 aa).

2 disordered regions span residues 1–21 (MAAAPQAPGRGSVRKTRPLPV) and 61–103 (EDRK…QASG). At alanine 2 the chain carries N-acetylalanine. The residue at position 12 (serine 12) is a Phosphoserine. Residues 88–97 (EDLKKEKPKG) are compositionally biased toward basic and acidic residues. A phosphoserine mark is found at serine 226 and serine 235. The tract at residues 262 to 282 (KLIPNPNKIRKPPKSKRTASK) is disordered. A compositionally biased stretch (basic residues) spans 269–282 (KIRKPPKSKRTASK).

It belongs to the eukaryotic ribosomal protein eL8 family. Component of nuclear RNase P and RNase MRP ribonucleoproteins. RNase P consists of a catalytic RNA moiety and about 10 protein subunits; POP1, POP4, POP5, POP7, RPP14, RPP21, RPP25, RPP30, RPP38 and RPP40. Within the RNase P complex, POP1, POP7 and RPP25 form the 'finger' subcomplex, POP5, RPP14, RPP40 and homodimeric RPP30 form the 'palm' subcomplex, and RPP21, POP4 and RPP38 form the 'wrist' subcomplex. All subunits of the RNase P complex interact with the catalytic RNA. Several subunits of RNase P are also part of the RNase MRP complex. RNase MRP consists of a catalytic RNA moiety and about 8 protein subunits; POP1, POP7, RPP25, RPP30, RPP38, RPP40 and possibly also POP4 and POP5.

The protein localises to the nucleus. Its subcellular location is the nucleolus. Component of ribonuclease P, a ribonucleoprotein complex that generates mature tRNA molecules by cleaving their 5'-ends. Also a component of the MRP ribonuclease complex, which cleaves pre-rRNA sequences. The protein is Ribonuclease P protein subunit p38 (RPP38) of Bos taurus (Bovine).